The following is a 284-amino-acid chain: Bifunctional protein FolD (284 aa).

Residues 166 to 168 (GAS), serine 191, and isoleucine 232 contribute to the NADP(+) site.

It belongs to the tetrahydrofolate dehydrogenase/cyclohydrolase family. Homodimer.

It catalyses the reaction (6R)-5,10-methylene-5,6,7,8-tetrahydrofolate + NADP(+) = (6R)-5,10-methenyltetrahydrofolate + NADPH. It carries out the reaction (6R)-5,10-methenyltetrahydrofolate + H2O = (6R)-10-formyltetrahydrofolate + H(+). It participates in one-carbon metabolism; tetrahydrofolate interconversion. Catalyzes the oxidation of 5,10-methylenetetrahydrofolate to 5,10-methenyltetrahydrofolate and then the hydrolysis of 5,10-methenyltetrahydrofolate to 10-formyltetrahydrofolate. This Neisseria meningitidis serogroup B (strain ATCC BAA-335 / MC58) protein is Bifunctional protein FolD.